Here is a 726-residue protein sequence, read N- to C-terminus: Catalase-peroxidase 1 (726 aa).

Residues 1–33 form a disordered region; that stretch reads MSTSDDIHNTTATGKCPFHQGGHDQSAGAGTTT. A cross-link (tryptophyl-tyrosyl-methioninium (Trp-Tyr) (with M-252)) is located at residues 105–226; sequence WHGAGTYRSI…LGATEMGLIY (122 aa). The active-site Proton acceptor is the histidine 106. The tryptophyl-tyrosyl-methioninium (Tyr-Met) (with W-105) cross-link spans 226–252; it reads YVNPEGPDHSGEPLSAAAAIRATFGNM. Position 267 (histidine 267) interacts with heme b.

It belongs to the peroxidase family. Peroxidase/catalase subfamily. Homodimer or homotetramer. Requires heme b as cofactor. In terms of processing, formation of the three residue Trp-Tyr-Met cross-link is important for the catalase, but not the peroxidase activity of the enzyme.

The enzyme catalyses H2O2 + AH2 = A + 2 H2O. The catalysed reaction is 2 H2O2 = O2 + 2 H2O. In terms of biological role, bifunctional enzyme with both catalase and broad-spectrum peroxidase activity. This Escherichia coli O157:H7 protein is Catalase-peroxidase 1.